The sequence spans 289 residues: MAWRDRRGALRAILEGSACVRPASVYDAISIRIADDLRFPLGMFGGSVASLAILGDPDSALITLTELAEQMRRMARAAALPVLVDADHGYGNALNVRRTVQELEAAGCAGLTIEDTLLPQAYGEAKPQLISSEEGLGKINAALDARLDPSLVIIGRTGACSISSLDDAIERAVAYEAAGVDALFFTGVKARDQLQAISAATRLPIVLGSPPAELADWEYLAAQRVRIAVQGHAPIAAATEAVFRTLSALRDGAAPQQLTGLATPELMDRVTRASLVDERGARFLGLARE.

Ser-47 lines the substrate pocket. Residue Asp-85 coordinates Mg(2+). Substrate is bound by residues Arg-156 and His-232.

It belongs to the isocitrate lyase/PEP mutase superfamily. Oxaloacetate decarboxylase family. As to quaternary structure, homotetramer; dimer of dimers. It depends on Mg(2+) as a cofactor.

It carries out the reaction oxaloacetate + H(+) = pyruvate + CO2. Functionally, catalyzes the decarboxylation of oxaloacetate into pyruvate. Seems to play a role in maintaining cellular concentrations of bicarbonate and pyruvate. The chain is Oxaloacetate decarboxylase from Rhodopseudomonas palustris (strain HaA2).